A 103-amino-acid polypeptide reads, in one-letter code: Large ribosomal subunit protein uL24 (103 aa).

A disordered region spans residues Y70 to N103.

The protein belongs to the universal ribosomal protein uL24 family. As to quaternary structure, part of the 50S ribosomal subunit.

In terms of biological role, one of two assembly initiator proteins, it binds directly to the 5'-end of the 23S rRNA, where it nucleates assembly of the 50S subunit. One of the proteins that surrounds the polypeptide exit tunnel on the outside of the subunit. The protein is Large ribosomal subunit protein uL24 of Lactiplantibacillus plantarum (strain ATCC BAA-793 / NCIMB 8826 / WCFS1) (Lactobacillus plantarum).